The chain runs to 718 residues: 1-deoxy-D-xylulose-5-phosphate synthase 1, chloroplastic (718 aa).

The N-terminal 55 residues, 1–55 (MAFCALSFPAHISRATTPAPSDLQKSSSFSSRFYWGADLLRPSQYKVRKIQSGVY), are a transit peptide targeting the chloroplast. Thiamine diphosphate contacts are provided by residues His143 and 184 to 186 (GHS). Asp215 provides a ligand contact to Mg(2+). Residues 216-217 (GA), Asn244, Tyr365, and Glu447 contribute to the thiamine diphosphate site. Asn244 serves as a coordination point for Mg(2+).

This sequence belongs to the transketolase family. DXPS subfamily. As to quaternary structure, homodimer. It depends on Mg(2+) as a cofactor. Thiamine diphosphate serves as cofactor. As to expression, expressed in trichomes, leaves, flowers, roots and stems.

Its subcellular location is the plastid. The protein localises to the chloroplast. The enzyme catalyses D-glyceraldehyde 3-phosphate + pyruvate + H(+) = 1-deoxy-D-xylulose 5-phosphate + CO2. Its pathway is metabolic intermediate biosynthesis; 1-deoxy-D-xylulose 5-phosphate biosynthesis; 1-deoxy-D-xylulose 5-phosphate from D-glyceraldehyde 3-phosphate and pyruvate: step 1/1. In terms of biological role, catalyzes the acyloin condensation reaction between C atoms 2 and 3 of pyruvate and glyceraldehyde 3-phosphate to yield 1-deoxy-D-xylulose-5-phosphate (DXP). This Cannabis sativa (Hemp) protein is 1-deoxy-D-xylulose-5-phosphate synthase 1, chloroplastic.